A 28-amino-acid polypeptide reads, in one-letter code: M-poneritoxin-Dq4a (28 aa).

Alanine 28 bears the Alanine amide mark.

In terms of tissue distribution, expressed by the venom gland.

The protein resides in the secreted. In terms of biological role, the synthetic peptide has weak antimicrobial activity against Gram-negative bacterium E.coli ATCC 10536. It does not show antimicrobial activity against the Gram-positive bacteria B.amyloliquefacies S499, L.monocytogenes 2231 and S.aureus ATCC 29213, against the Gram-negative bacteria P.putida BTP1 and P.aeruginosa PaO1, or against the fungi S.cerevisiae, R.mucilaginosa, C.cucumerinum, F.oxysporum and B.cinerea. The protein is M-poneritoxin-Dq4a of Dinoponera quadriceps (South American ant).